The chain runs to 335 residues: Phospholipid scramblase 1 (335 aa).

Residues 1–101 (MEKHGPPEHA…NHPGGPGGTP (101 aa)) form a proline-rich domain (PRD) region. Residues 1–102 (MEKHGPPEHA…HPGGPGGTPW (102 aa)) are disordered. Over 1 to 305 (MEKHGPPEHA…IQFPLDLDVK (305 aa)) the chain is Cytoplasmic. 6 consecutive repeat copies span residues 23 to 29 (QGPYPGP), 30 to 36 (QGPYPGP), 37 to 43 (QGPYAGP), 44 to 50 (QGPYPGP), 51 to 57 (QGPYAGP), and 58 to 64 (QGPYPGP). Residues 23–71 (QGPYPGPQGPYPGPQGPYAGPQGPYPGPQGPYAGPQGPYPGPQPGYPVP) are 7 X 7 AA tandem repeats of Q-G-P-Y-[AP]-G-P. The span at 26–37 (YPGPQGPYPGPQ) shows a compositional bias: pro residues. Pro residues predominate over residues 59–72 (GPYPGPQPGYPVPP). The SH3-binding 1 motif lies at 64-72 (PQPGYPVPP). The 7; approximate repeat unit spans residues 65 to 71 (QPGYPVP). The residue at position 91 (Tyr-91) is a Phosphotyrosine; by ABL. The SH3-binding 2 signature appears at 101 to 109 (PWMQAPPPP). At Thr-178 the chain carries Phosphothreonine; by PKC/PRKCD. Residues Cys-201, Cys-202, Cys-205, and Cys-206 are each lipidated (S-palmitoyl cysteine). Residues 274-283 (GKISKQWSGF) carry the Nuclear localization signal motif. Residues 306–322 (MKAVMLGACFLIDFMFF) traverse the membrane as a helical segment. Residues 323–335 (ERTGNEEQRSGVW) lie on the Extracellular side of the membrane.

This sequence belongs to the phospholipid scramblase family. As to quaternary structure, forms homooligomers in the presence of calcium. Interacts with ABL. Interacts with RELT, RELL1 and RELL2. Interacts with OXSR1 in the presence of RELT. Interacts with OCLN, TOP2A and TOP2B. Interacts with TRPC1, TRPC4 and TRPC5. Interacts with ILDR1. It depends on Ca(2+) as a cofactor. Mg(2+) is required as a cofactor. The cofactor is Zn(2+). In terms of processing, phosphorylated on tyrosine residues. Phosphorylated by OXSR1 in the presence of RELT. Phosphorylation at Thr-178 by PKC/PKCD increases its phospholipid scramblase activity during both cell stimulation and apoptosis. Palmitoylation is required for its phospholipid scramblase activity. Palmitoylation regulates its localization to the cell membrane or the nucleus; trafficking to the cell membrane is dependent upon palmitoylation whereas in the absence of palmitoylation, localizes to the nucleus.

The protein localises to the cell membrane. Its subcellular location is the nucleus. It localises to the cytoplasm. The protein resides in the perinuclear region. The catalysed reaction is a 1,2-diacyl-sn-glycero-3-phosphocholine(in) = a 1,2-diacyl-sn-glycero-3-phosphocholine(out). It carries out the reaction a 1,2-diacyl-sn-glycero-3-phosphoethanolamine(in) = a 1,2-diacyl-sn-glycero-3-phosphoethanolamine(out). It catalyses the reaction a 1,2-diacyl-sn-glycero-3-phospho-L-serine(in) = a 1,2-diacyl-sn-glycero-3-phospho-L-serine(out). Catalyzes calcium-induced ATP-independent rapid bidirectional and non-specific distribution of phospholipids (lipid scrambling or lipid flip-flop) between the inner and outer leaflet of the plasma membrane resulting in collapse of the phospholipid asymmetry which leads to phosphatidylserine externalization on the cell surface. Mediates calcium-dependent phosphatidylserine externalization and apoptosis in neurons via its association with TRPC5. Also exhibits magnesium-dependent nuclease activity against double-stranded DNA and RNA but not single-stranded DNA and can enhance DNA decatenation mediated by TOP2A. Negatively regulates FcR-mediated phagocytosis in differentiated macrophages. May contribute to cytokine-regulated cell proliferation and differentiation. The protein is Phospholipid scramblase 1 (Plscr1) of Rattus norvegicus (Rat).